Consider the following 710-residue polypeptide: Dendrin (710 aa).

4 disordered regions span residues 1 to 22, 62 to 195, 213 to 274, and 324 to 375; these read MLDGPLFSEGPDSPRELQDEES, WARG…PWGG, AGTA…KRLD, and GLNS…GKEG. A coiled-coil region spans residues 103–134; sequence AEVRAREQEKRKAASQEREAKETERKRRKAGG. Basic and acidic residues predominate over residues 105–127; the sequence is VRAREQEKRKAASQEREAKETER. A nuclear localization region spans residues 113–131; that stretch reads RKAASQEREAKETERKRRK. An interaction with MAGI2 region spans residues 186-236; sequence GVAWAGPWGGRRPGPPSYEAHLLLRGSAGTAPRRRWDRPPPYVAPPSYEGP. Residues 265–274 show a composition bias toward basic and acidic residues; it reads EGGRTKKRLD. The segment at 341 to 435 is interaction with ACTN1; sequence PGTDAALSRS…LEVWKVTRRA (95 aa). The segment covering 360–370 has biased composition (basic residues); it reads PRSRQHLRGSR. Phosphoserine is present on S388. 3 disordered regions span residues 390-422, 469-508, and 521-710; these read KKPPVRHSQTLPRPWAPGGTGWKESLGQREGAE, PRTQQGQLVPSGESCSVSDSLSQPKPCHEEEGEGAAANPS, and NQPS…RERE. The tract at residues 407-708 is interaction with CD2AP and NPHS1; that stretch reads GGTGWKESLG…TRKTPQGNRE (302 aa). A compositionally biased stretch (polar residues) spans 469–491; that stretch reads PRTQQGQLVPSGESCSVSDSLSQ. Residues 693–710 are compositionally biased toward basic and acidic residues; sequence GFIREDTRKTPQGNRERE.

Forms a ternary complex with MAGI2 and SH3KBP1; recruits DDN to the cytoplasm. Interacts with MAGI1. Interacts with ACTN1 and may interact with WWC1. Interacts with the podocyte slit diaphragm proteins CD2AP, NPHS1 and NPHS2; the interaction with CD2AP and NPHS1 is direct. Two forms of 81 kDa and 89 kDa are expressed in brain. The 81 kDa form is the only one found in kidney podocytes.

It localises to the cell projection. The protein resides in the dendritic spine membrane. Its subcellular location is the cytoplasm. It is found in the endoplasmic reticulum membrane. The protein localises to the perikaryon. It localises to the nucleus. Promotes apoptosis of kidney glomerular podocytes. Podocytes are highly specialized cells essential to the ultrafiltration of blood, resulting in the extraction of urine and the retention of protein. This is Dendrin (Ddn) from Mus musculus (Mouse).